Consider the following 471-residue polypeptide: Threonine--tRNA ligase catalytic subunit (471 aa).

Residues 8 to 333 form a catalytic region; the sequence is THIDYAYELD…YLEHRRGRMP (326 aa). 3 residues coordinate Zn(2+): cysteine 112, histidine 166, and histidine 310.

The protein belongs to the class-II aminoacyl-tRNA synthetase family. In terms of assembly, homodimer. Probably interacts with its editing subunit. The cofactor is Zn(2+).

It localises to the cytoplasm. The catalysed reaction is tRNA(Thr) + L-threonine + ATP = L-threonyl-tRNA(Thr) + AMP + diphosphate + H(+). Its function is as follows. Catalyzes the attachment of threonine to tRNA(Thr) in a two-step reaction: L-threonine is first activated by ATP to form Thr-AMP and then transferred to the acceptor end of tRNA(Thr). This protein is probably not able to deacylate mischarged L-seryl-tRNA(Thr) as it lacks the appropriate domain. The sequence is that of Threonine--tRNA ligase catalytic subunit from Aeropyrum pernix (strain ATCC 700893 / DSM 11879 / JCM 9820 / NBRC 100138 / K1).